The following is a 90-amino-acid chain: U7-theraphotoxin-Hhn1a 8 (90 aa).

The signal sequence occupies residues 1–19 (MKTAIFTVVLALAVFAVLS). Positions 20 to 50 (FGWEANEKALSEEFTELIHEKGAASETEARE) are excised as a propeptide. Cystine bridges form between Cys-51–Cys-65, Cys-58–Cys-70, and Cys-64–Cys-81.

It belongs to the neurotoxin 10 (Hwtx-1) family. 13 (Hntx-13) subfamily. In terms of tissue distribution, expressed by the venom gland.

The protein resides in the secreted. Functionally, ion channel inhibitor. The protein is U7-theraphotoxin-Hhn1a 8 of Cyriopagopus hainanus (Chinese bird spider).